The following is a 433-amino-acid chain: Apolipoprotein L5 (433 aa).

Residues 346–433 (HHRHLPQKAS…GRQAPGRHRQ (88 aa)) form a disordered region. Low complexity predominate over residues 359–371 (SSSRGRAVRGSRV). Basic residues predominate over residues 422-433 (RKGRQAPGRHRQ).

The protein belongs to the apolipoprotein L family. Low level of expression; detected in uterus, testis, skeletal muscle and stomach.

Its subcellular location is the cytoplasm. In terms of biological role, may affect the movement of lipids in the cytoplasm or allow the binding of lipids to organelles. This Homo sapiens (Human) protein is Apolipoprotein L5 (APOL5).